The primary structure comprises 296 residues: MFKSGFVTIVGRPNVGKSTLLNAIMKEKLSIVSCRPQTTRNNIQTILTEDNYQLVFVDTPGIHKPKHKLGEYMVKSASDAMKDVDLVLFLINPDEKPGRGDLFIIEQLKEVKVPVFLVLNKIDENPQEKVAETLKTYSELMEFEEIIPISALKGKNIDLLKELMFKYIPEGPQYYPEDMIIDQNERFIVAEIVREKALRLLSEEVPHGIAVEILQMKKNEKGTYHIEGNILCEKNSHKPIIIGKGGSKLKKISQYARQDIEAFLQSKVYIRLWVKVKEEWRDNQSLLKELGYKKMK.

Residues 3–170 (KSGFVTIVGR…KELMFKYIPE (168 aa)) form the Era-type G domain. The segment at 11–18 (GRPNVGKS) is G1. 11-18 (GRPNVGKS) contacts GTP. Residues 37-41 (QTTRN) form a G2 region. The G3 stretch occupies residues 58–61 (DTPG). Residues 58-62 (DTPGI) and 120-123 (NKID) contribute to the GTP site. The G4 stretch occupies residues 120 to 123 (NKID). The tract at residues 149 to 151 (ISA) is G5. The KH type-2 domain maps to 201 to 278 (LSEEVPHGIA…YIRLWVKVKE (78 aa)).

Belongs to the TRAFAC class TrmE-Era-EngA-EngB-Septin-like GTPase superfamily. Era GTPase family. As to quaternary structure, monomer.

It is found in the cytoplasm. The protein resides in the cell membrane. Functionally, an essential GTPase that binds both GDP and GTP, with rapid nucleotide exchange. Plays a role in 16S rRNA processing and 30S ribosomal subunit biogenesis and possibly also in cell cycle regulation and energy metabolism. The chain is GTPase Era from Clostridium botulinum (strain Okra / Type B1).